A 54-amino-acid polypeptide reads, in one-letter code: uncharacterized protein (54 aa).

Residues 32-52 form a helical membrane-spanning segment; the sequence is LFSLLVLIILCFIDPILFYFI.

Its subcellular location is the host membrane. This is an uncharacterized protein from Cassava vein mosaic virus (CsVMV).